A 117-amino-acid polypeptide reads, in one-letter code: UPF0125 protein VV0820 (117 aa).

Positions 90–117 (RKRAEQAKESGAADPVTGGKPSPLRKAD) are disordered.

The protein belongs to the UPF0125 (RnfH) family.

The sequence is that of UPF0125 protein VV0820 from Vibrio vulnificus (strain YJ016).